The primary structure comprises 358 residues: Putative UDP-kanosamine synthase oxidoreductase subunit (358 aa).

In terms of assembly, interacts with RifK.

The catalysed reaction is UDP-alpha-D-glucose + NAD(+) = UDP-3-oxo-alpha-D-glucose + NADH + H(+). Its pathway is antibiotic biosynthesis; rifamycin B biosynthesis. Its function is as follows. In a complex with RifK, RifL may catalyze the oxidation of UDP-glucose to UDP-3-keto-D-glucose, which would then be used by RifK to produce UDP-kanosamine. Is not able to use dTDP-glucose as substrate. In Amycolatopsis mediterranei (strain S699) (Nocardia mediterranei), this protein is Putative UDP-kanosamine synthase oxidoreductase subunit (rifL).